Here is a 225-residue protein sequence, read N- to C-terminus: Cbp/p300-interacting transactivator 2 (225 aa).

Belongs to the CITED family.

The protein resides in the nucleus. Functionally, transcriptional coactivator or corepressor of the p300/CBP-mediated transcription complex. May be involved in sex determination, early gonad development, left-right patterning during embryogenesis and differentiation of the adrenal cortex. This Xenopus laevis (African clawed frog) protein is Cbp/p300-interacting transactivator 2 (cited2).